A 2365-amino-acid polypeptide reads, in one-letter code: TRIO and F-actin-binding protein (2365 aa).

Disordered regions lie at residues 48-1106 (VPYC…HEPL), 1168-1554 (HRDA…SERR), 1593-1667 (LPRK…WPKI), and 1679-1751 (AGLE…TSWR). The span at 132–151 (SDPTSSPDSATPDDTSNSSS) shows a compositional bias: low complexity. Residue His-221 is modified to Phosphothreonine. 13 stretches are compositionally biased toward polar residues: residues 239–271 (TLTQASSMTPHSGPRSTTSQASPAQRDTAQAAS), 291–375 (RASS…TPQR), 403–422 (RTSCAQRDNPKASRTSSPNR), 429–471 (RTSC…SPNR), 478–520 (RTSC…SPNR), 527–569 (RTSC…SPNR), 576–618 (RTSC…SPNR), 625–650 (RTSCAQRDNPRASSPNRTTQQDSPRT), 661–674 (SSPNRTIQQENPRT), 683–701 (RASSPSRTIQQENPRTSCA), 709–722 (SSPNRTTQQENPRT), 745–785 (RTSC…SPNR), and 807–837 (IRATQQDNPRTCIQQNIPRSSSTQQDNPKTS). Residues 324 to 348 (STQEDTPRASSTQWNTPRASSPSRS) are essentiel for its aggregation. Gln-457 is modified (phosphothreonine). Positions 839–854 (TKRDNLRPTCTQRDRT) are enriched in basic and acidic residues. Polar residues-rich tracts occupy residues 855–898 (QSFS…SSPH), 913–927 (PTQSDGPRTSSPSRS), and 945–994 (DRPQ…TSSP). Residues 1045 to 1056 (RAPESEPPHHEP) show a composition bias toward basic and acidic residues. Residues 1195–1206 (SMESLAPSTDSL) show a composition bias toward polar residues. Basic and acidic residues-rich tracts occupy residues 1260–1270 (ETRHNLEREEY) and 1303–1319 (GRAEVERLFGQERRKSE). The span at 1332–1349 (SQQPSQGQSQLLRRQSSP) shows a compositional bias: low complexity. Basic and acidic residues-rich tracts occupy residues 1378–1387 (SPEKRPEGDR) and 1402–1411 (TPERELRTQR). Residues 1452-1461 (GGLGPGGWWG) are compositionally biased toward gly residues. Over residues 1494–1508 (WEEKPTHELPRELGK) the composition is skewed to basic and acidic residues. Positions 1524–1534 (ESSQSWHSGTP) are enriched in polar residues. Residues 1594–1606 (PRKDPAGHRDDLA) are compositionally biased toward basic and acidic residues. Polar residues predominate over residues 1645–1664 (ALQSQSPVQLPSPACTSTQW). A compositionally biased stretch (low complexity) spans 1696-1705 (PSLPELQFQP). A compositionally biased stretch (basic and acidic residues) spans 1724-1735 (KQADSADKRPAE). The PH domain maps to 1778–1887 (LNFKKGWMSI…WIEALRKTVR (110 aa)). Phosphoserine is present on Ser-1796. 2 disordered regions span residues 1889-2017 (TSAP…LTED) and 2174-2194 (LSKTRSLQQGPDGLRKQHQSD). Arg-1930 carries the post-translational modification Omega-N-methylarginine. A phosphoserine mark is found at Ser-1949 and Ser-1955. Over residues 1965-1997 (TPDRLAKQEELERDLAQRSEERRKWFEATDSRT) the composition is skewed to basic and acidic residues. 2 coiled-coil regions span residues 2062–2247 (SDGH…NQEL) and 2281–2361 (ELEV…SMRN).

Isoform 1 forms aggregates. Isoform 1 binds to TRIO and F-actin. Isoform 1 may also interact with myosin II. Interacts with HECTD3. Interacts with PJVK. Interacts with TERF1; mediates TERF1 localization to the centrosome. In terms of processing, ubiquitinated by HECTD3, leading to its degradation by the proteasome. Post-translationally, phosphorylation at Thr-457 by PLK1 ensures mitotic progression and is essential for accurate chromosome segregation. Phosphorylation at residues Thr-221 and Thr-457 by kinase NEK2A and PLK1 coordinates TERF1 translocation from telomere to spindle pole. In terms of tissue distribution, widely expressed. Highly expressed in heart and placenta. As to expression, expressed in fetal brain, retina and cochlea but is not detectable in the other tissues.

Its subcellular location is the nucleus. The protein resides in the cytoplasm. It is found in the cytoskeleton. It localises to the microtubule organizing center. The protein localises to the centrosome. Its subcellular location is the midbody. The protein resides in the chromosome. It is found in the telomere. Its function is as follows. Regulates actin cytoskeletal organization, cell spreading and cell contraction by directly binding and stabilizing filamentous F-actin and prevents its depolymerization. May also serve as a linker protein to recruit proteins required for F-actin formation and turnover. Essential for correct mitotic progression. In terms of biological role, plays a pivotal role in the formation of stereocilia rootlets. This is TRIO and F-actin-binding protein (TRIOBP) from Homo sapiens (Human).